The following is a 2205-amino-acid chain: Genome polyprotein (2205 aa).

Glycine 2 carries N-myristoyl glycine; by host lipidation. Topologically, residues glycine 2 to glutamine 1518 are cytoplasmic. The interval glycine 579 to leucine 599 is amphipathic alpha-helix. Polar residues predominate over residues proline 598 to proline 613. The tract at residues proline 598–threonine 619 is disordered. Active-site for protease 2A activity residues include histidine 899 and aspartate 917. Positions 934 and 936 each coordinate Zn(2+). Residue cysteine 988 is the For protease 2A activity of the active site. The Zn(2+) site is built by cysteine 994 and histidine 996. The membrane-binding stretch occupies residues glycine 1126–glutamine 1198. Residues glycine 1126–threonine 1264 form an oligomerization region. The RNA-binding stretch occupies residues serine 1147 to serine 1151. The SF3 helicase domain maps to glutamate 1230 to asparagine 1386. An ATP-binding site is contributed by glycine 1254–serine 1261. Residues cysteine 1394, cysteine 1397, cysteine 1406, and cysteine 1411 each coordinate Zn(2+). The C4-type zinc-finger motif lies at cysteine 1394–cysteine 1411. The segment at glutamate 1438–isoleucine 1445 is RNA-binding. An oligomerization region spans residues methionine 1449–glutamine 1454. An intramembrane segment occupies alanine 1519–tyrosine 1534. Topologically, residues lysine 1535–phenylalanine 2205 are cytoplasmic. The residue at position 1544 (tyrosine 1544) is an O-(5'-phospho-RNA)-tyrosine. Residues glycine 1564 to phenylalanine 1742 form the Peptidase C3 domain. Catalysis depends on for protease 3C activity residues histidine 1603, glutamate 1634, and cysteine 1710. Residues methionine 1971–leucine 2086 enclose the RdRp catalytic domain. Residues aspartate 1977 and aspartate 2072 each contribute to the Mg(2+) site.

This sequence belongs to the picornaviruses polyprotein family. As to quaternary structure, interacts with capsid protein VP1 and capsid protein VP3 to form heterotrimeric protomers. Interacts with capsid protein VP0, and capsid protein VP3 to form heterotrimeric protomers. Interacts with human PVR. Five protomers subsequently associate to form pentamers which serve as building blocks for the capsid. Interacts with capsid protein VP2, capsid protein VP3 and capsid protein VP4 following cleavage of capsid protein VP0. In terms of assembly, interacts with capsid protein VP1 and capsid protein VP3 in the mature capsid. As to quaternary structure, interacts with capsid protein VP0 and capsid protein VP1 to form heterotrimeric protomers. Five protomers subsequently associate to form pentamers which serve as building blocks for the capsid. Interacts with capsid protein VP4 in the mature capsid. Interacts with protein 2C; this interaction may be important for virion morphogenesis. Interacts with capsid protein VP1 and capsid protein VP3. In terms of assembly, homodimer. As to quaternary structure, homohexamer; forms a hexameric ring structure with 6-fold symmetry characteristic of AAA+ ATPases. Interacts (via N-terminus) with host RTN3 (via reticulon domain); this interaction is important for viral replication. Interacts with capsid protein VP3; this interaction may be important for virion morphogenesis. Interacts with protein 3CD. In terms of assembly, homodimer. Interacts with host GBF1. Interacts (via GOLD domain) with host ACBD3 (via GOLD domain); this interaction allows the formation of a viral protein 3A/ACBD3 heterotetramer with a 2:2 stoichiometry, which will stimulate the recruitment of host PI4KB in order to synthesize PI4P at the viral RNA replication sites. As to quaternary structure, interacts with RNA-directed RNA polymerase. Interacts with protein 3AB and with RNA-directed RNA polymerase. In terms of assembly, interacts with Viral protein genome-linked and with protein 3CD. The cofactor is Mg(2+). Specific enzymatic cleavages in vivo by the viral proteases yield processing intermediates and the mature proteins. In terms of processing, myristoylation is required for the formation of pentamers during virus assembly. Further assembly of 12 pentamers and a molecule of genomic RNA generates the provirion. Post-translationally, during virion maturation, immature virions are rendered infectious following cleavage of VP0 into VP4 and VP2. This maturation seems to be an autocatalytic event triggered by the presence of RNA in the capsid and it is followed by a conformational change infectious virion. Myristoylation is required during RNA encapsidation and formation of the mature virus particle. In terms of processing, VPg is uridylylated by the polymerase into VPg-pUpU. This acts as a nucleotide-peptide primer for the genomic RNA replication.

It is found in the virion. Its subcellular location is the host cytoplasm. The protein localises to the host cytoplasmic vesicle membrane. It localises to the host nucleus. The catalysed reaction is a ribonucleoside 5'-triphosphate + H2O = a ribonucleoside 5'-diphosphate + phosphate + H(+). It catalyses the reaction Selective cleavage of Tyr-|-Gly bond in the picornavirus polyprotein.. The enzyme catalyses RNA(n) + a ribonucleoside 5'-triphosphate = RNA(n+1) + diphosphate. It carries out the reaction Selective cleavage of Gln-|-Gly bond in the poliovirus polyprotein. In other picornavirus reactions Glu may be substituted for Gln, and Ser or Thr for Gly.. Its activity is regulated as follows. Replication or transcription is subject to high level of random mutations by the nucleotide analog ribavirin. Functionally, forms an icosahedral capsid of pseudo T=3 symmetry with capsid proteins VP2 and VP3. The capsid is 300 Angstroms in diameter, composed of 60 copies of each capsid protein and enclosing the viral positive strand RNA genome. Capsid protein VP1 mainly forms the vertices of the capsid. Capsid protein VP1 interacts with host cell receptor PVR to provide virion attachment to target host cells. This attachment induces virion internalization predominantly through clathrin- and caveolin-independent endocytosis in Hela cells and through caveolin-mediated endocytosis in brain microvascular endothelial cells. Tyrosine kinases are probably involved in the entry process. Virus binding to PVR induces increased junctional permeability and rearrangement of junctional proteins. Modulation of endothelial tight junctions, as well as cytolytic infection of endothelial cells themselves, may result in loss of endothelial integrity which may help the virus to reach the CNS. After binding to its receptor, the capsid undergoes conformational changes. Capsid protein VP1 N-terminus (that contains an amphipathic alpha-helix) and capsid protein VP4 are externalized. Together, they shape a pore in the host membrane through which viral genome is translocated to host cell cytoplasm. In terms of biological role, forms an icosahedral capsid of pseudo T=3 symmetry with capsid proteins VP2 and VP3. The capsid is 300 Angstroms in diameter, composed of 60 copies of each capsid protein and enclosing the viral positive strand RNA genome. Its function is as follows. Lies on the inner surface of the capsid shell. After binding to the host receptor, the capsid undergoes conformational changes. Capsid protein VP4 is released, Capsid protein VP1 N-terminus is externalized, and together, they shape a pore in the host membrane through which the viral genome is translocated into the host cell cytoplasm. Component of immature procapsids, which is cleaved into capsid proteins VP4 and VP2 after maturation. Allows the capsid to remain inactive before the maturation step. Functionally, cysteine protease that cleaves viral polyprotein and specific host proteins. It is responsible for the autocatalytic cleavage between the P1 and P2 regions, which is the first cleavage occurring in the polyprotein. Also cleaves the host translation initiation factor EIF4G1, in order to shut down the capped cellular mRNA translation. Inhibits the host nucleus-cytoplasm protein and RNA trafficking by cleaving host members of the nuclear pores including NUP98, NUP62 and NUP153. Counteracts stress granule formation probably by antagonizing its assembly or promoting its dissassembly. Cleaves and inhibits host IFIH1/MDA5, thereby inhibiting the type-I IFN production and the establishment of the antiviral state. Cleaves and inhibits host MAVS, thereby inhibiting the type-I IFN production and the establishment of the antiviral state. In terms of biological role, plays an essential role in the virus replication cycle by acting as a viroporin. Creates a pore in the host endoplasmic reticulum and as a consequence releases Ca2+ in the cytoplasm of infected cell. In turn, high levels of cytoplasmic calcium may trigger membrane trafficking and transport of viral ER-associated proteins to viroplasms, sites of viral genome replication. Its function is as follows. Induces and associates with structural rearrangements of intracellular membranes. Displays RNA-binding, nucleotide binding and NTPase activities. May play a role in virion morphogenesis and viral RNA encapsidation by interacting with the capsid protein VP3. Localizes the viral replication complex to the surface of membranous vesicles. Together with protein 3CD binds the Cis-Active RNA Element (CRE) which is involved in RNA synthesis initiation. Acts as a cofactor to stimulate the activity of 3D polymerase, maybe through a nucleid acid chaperone activity. Functionally, localizes the viral replication complex to the surface of membranous vesicles. It inhibits host cell endoplasmic reticulum-to-Golgi apparatus transport and causes the disassembly of the Golgi complex, possibly through GBF1 interaction. This would result in depletion of MHC, trail receptors and IFN receptors at the host cell surface. Plays an essential role in viral RNA replication by recruiting ACBD3 and PI4KB at the viral replication sites, thereby allowing the formation of the rearranged membranous structures where viral replication takes place. In terms of biological role, acts as a primer for viral RNA replication and remains covalently bound to viral genomic RNA. VPg is uridylylated prior to priming replication into VPg-pUpU. The oriI viral genomic sequence may act as a template for this. The VPg-pUpU is then used as primer on the genomic RNA poly(A) by the RNA-dependent RNA polymerase to replicate the viral genome. During genome replication, the VPg-RNA linkage is removed by the host TDP2, thereby accelerating replication. During the late stage of the replication cycle, host TDP2 is excluded from sites of viral RNA synthesis and encapsidation, allowing for the generation of progeny virions. Its function is as follows. Involved in the viral replication complex and viral polypeptide maturation. It exhibits protease activity with a specificity and catalytic efficiency that is different from protease 3C. Protein 3CD lacks polymerase activity. Protein 3CD binds to the 5'UTR of the viral genome. Major viral protease that mediates proteolytic processing of the polyprotein. Cleaves host EIF5B, contributing to host translation shutoff. Also cleaves host PABPC1, contributing to host translation shutoff. Cleaves host RIGI and thus contributes to the inhibition of type I interferon production. Cleaves host NLRP1, triggers host N-glycine-mediated degradation of the autoinhibitory NLRP1 N-terminal fragment. Inhibits the integrated stress response (ISR) in the infected cell by cleaving host G3BP1. Stress granule formation is thus inhibited, which allows protein synthesis and viral replication. Functionally, replicates the viral genomic RNA on the surface of intracellular membranes. May form linear arrays of subunits that propagate along a strong head-to-tail interaction called interface-I. Covalently attaches UMP to a tyrosine of VPg, which is used to prime RNA synthesis. The positive stranded RNA genome is first replicated at virus induced membranous vesicles, creating a dsRNA genomic replication form. This dsRNA is then used as template to synthesize positive stranded RNA genomes. ss(+)RNA genomes are either translated, replicated or encapsidated. The chain is Genome polyprotein from Homo sapiens (Human).